Here is a 622-residue protein sequence, read N- to C-terminus: Mitochondrial distribution and morphology protein 34 (622 aa).

The region spanning 1–204 is the SMP-LTD domain; that stretch reads MSFKVNWNSL…LPTLIHQLSL (204 aa). Disordered regions lie at residues 364 to 393, 442 to 468, and 572 to 592; these read YSNKDAPNKPKRRRIKVHKKSKAKQDDNTV, LETMSTGSSSSASSQVIAHPTPKRAYQ, and LDGGKNSANTNNSSGGKNFRP. Basic residues predominate over residues 372–385; sequence KPKRRRIKVHKKSK. A compositionally biased stretch (low complexity) spans 446–455; sequence STGSSSSASS. A compositionally biased stretch (polar residues) spans 577–587; the sequence is NSANTNNSSGG.

Belongs to the MDM34 family. Component of the ER-mitochondria encounter structure (ERMES) or MDM complex, composed of MMM1, MDM10, MDM12 and MDM34.

It is found in the mitochondrion outer membrane. Its function is as follows. Component of the ERMES/MDM complex, which serves as a molecular tether to connect the endoplasmic reticulum (ER) and mitochondria. Components of this complex are involved in the control of mitochondrial shape and protein biogenesis, and function in nonvesicular lipid trafficking between the ER and mitochondria. MDM34 is required for the interaction of the ER-resident membrane protein MMM1 and the outer mitochondrial membrane-resident beta-barrel protein MDM10. The protein is Mitochondrial distribution and morphology protein 34 of Candida albicans (strain WO-1) (Yeast).